Here is a 338-residue protein sequence, read N- to C-terminus: Malate dehydrogenase, mitochondrial (338 aa).

The N-terminal 24 residues, 1–24 (MLSALARPASAVLRRSFSTSAQNN), are a transit peptide targeting the mitochondrion. Residues 31–37 (GASGGIG) and Asp57 contribute to the NAD(+) site. An O-linked (GlcNAc) serine glycan is attached at Ser33. Residues Lys78 and Lys91 each carry the N6-acetyllysine; alternate modification. N6-succinyllysine; alternate occurs at positions 78 and 91. Residues Arg104 and Arg110 each coordinate substrate. NAD(+)-binding positions include Asn117 and 140–142 (IAN). Asn142 provides a ligand contact to substrate. Lys165 carries the N6-acetyllysine modification. Arg176 provides a ligand contact to substrate. Position 185 is an N6-acetyllysine; alternate (Lys185). Position 185 is an N6-succinyllysine; alternate (Lys185). His200 acts as the Proton acceptor in catalysis. An N6-succinyllysine modification is found at Lys203. N6-acetyllysine; alternate occurs at positions 215 and 239. N6-succinyllysine; alternate occurs at positions 215 and 239. Lys239 carries the post-translational modification N6-malonyllysine; alternate. Ser246 carries the post-translational modification Phosphoserine. Position 251 (Met251) interacts with NAD(+). Lys269 bears the N6-succinyllysine mark. Lys296, Lys301, Lys307, Lys314, and Lys324 each carry N6-acetyllysine; alternate. An N6-succinyllysine; alternate mark is found at Lys296, Lys301, Lys307, Lys314, and Lys324. At Lys307 the chain carries N6-malonyllysine; alternate. Ser326 carries the post-translational modification Phosphoserine. An N6-acetyllysine; alternate mark is found at Lys328, Lys329, and Lys335. N6-succinyllysine; alternate is present on Lys328. Lys329 is subject to N6-malonyllysine; alternate. Lys335 bears the N6-succinyllysine; alternate mark.

This sequence belongs to the LDH/MDH superfamily. MDH type 1 family. As to quaternary structure, homodimer. Post-translationally, acetylation is enhanced after treatment either with trichostin A (TCA) or with nicotinamide (NAM) with the appearance of tri- and tetraacetylations. Glucose also increases acetylation.

The protein localises to the mitochondrion matrix. It carries out the reaction (S)-malate + NAD(+) = oxaloacetate + NADH + H(+). Its activity is regulated as follows. Enzyme activity is enhanced by acetylation. This Pongo abelii (Sumatran orangutan) protein is Malate dehydrogenase, mitochondrial (MDH2).